The sequence spans 419 residues: Elongation factor Tu, chloroplastic (419 aa).

The region spanning 10 to 214 is the tr-type G domain; the sequence is KPHVNIGTIG…KVDEYIPTPD (205 aa). The segment at 19–26 is G1; that stretch reads GHVDHGKT. 19–26 is a binding site for GTP; sequence GHVDHGKT. T26 lines the Mg(2+) pocket. The tract at residues 60 to 64 is G2; that stretch reads GITIN. The segment at 81–84 is G3; sequence DCPG. Residues 81–85 and 136–139 each bind GTP; these read DCPGH and NKED. The segment at 136 to 139 is G4; that stretch reads NKED. The tract at residues 174-176 is G5; sequence SAL.

The protein belongs to the TRAFAC class translation factor GTPase superfamily. Classic translation factor GTPase family. EF-Tu/EF-1A subfamily.

It is found in the plastid. The protein localises to the chloroplast. It catalyses the reaction GTP + H2O = GDP + phosphate + H(+). GTP hydrolase that promotes the GTP-dependent binding of aminoacyl-tRNA to the A-site of ribosomes during protein biosynthesis. The protein is Elongation factor Tu, chloroplastic (tufA) of Tetradesmus obliquus (Green alga).